Consider the following 221-residue polypeptide: Probable septum site-determining protein MinC (221 aa).

This sequence belongs to the MinC family. Interacts with MinD and FtsZ.

Its function is as follows. Cell division inhibitor that blocks the formation of polar Z ring septums. Rapidly oscillates between the poles of the cell to destabilize FtsZ filaments that have formed before they mature into polar Z rings. Prevents FtsZ polymerization. The chain is Probable septum site-determining protein MinC from Prochlorococcus marinus (strain SARG / CCMP1375 / SS120).